Reading from the N-terminus, the 253-residue chain is MSYSVGQVAGFAGVTVRTLHHYDDIGLLVPSERSHAGHRRYSDADLDRLQQILFYRELGFPLDEVAALLDDPAADPRAHLRRQHELLSARIGKLQKMAAAVEQAMEARSMGINLTPEEKFEVFGDFDPDQYEEEVRERWGNTDAYRQSKEKTASYTKEDWQRIQDEADELTRRFVALMDAGEPADSEGAMDAAEDHRQGIARNHYDCGYEMHTCLGEMYVSDERFTRNIDAAKPGLAAYMRDAILANAVRHTP.

Residues 1 to 71 form the HTH merR-type domain; sequence MSYSVGQVAG…LDEVAALLDD (71 aa). A DNA-binding region (H-T-H motif) is located at residues 5–24; that stretch reads VGQVAGFAGVTVRTLHHYDD.

As to quaternary structure, homodimer.

Transcriptional activator. Is activated when bound to the antibiotic thiostrepton. The chain is HTH-type transcriptional activator TipA (tipA) from Streptomyces coelicolor (strain ATCC BAA-471 / A3(2) / M145).